The following is a 375-amino-acid chain: Growth/differentiation factor 8 (375 aa).

The first 18 residues, 1 to 18 (MQKLQISVYIYLFMLIVA), serve as a signal peptide directing secretion. Residues 19–266 (GPVDLNENSE…VTDTPKRSRR (248 aa)) constitute a propeptide that is removed on maturation. N-linked (GlcNAc...) asparagine glycosylation is present at Asn-71. 4 disulfides stabilise this stretch: Cys-272-Cys-282, Cys-281-Cys-340, Cys-309-Cys-372, and Cys-313-Cys-374.

This sequence belongs to the TGF-beta family. As to quaternary structure, homodimer; disulfide-linked. Interacts with WFIKKN2, leading to inhibit its activity. Interacts with FSTL3. Post-translationally, synthesized as large precursor molecule that undergoes proteolytic cleavage to generate an N-terminal propeptide and a disulfide linked C-terminal dimer, which is the biologically active molecule. The circulating form consists of a latent complex of the C-terminal dimer and other proteins, including its propeptide, which maintain the C-terminal dimer in a latent, inactive state. Ligand activation requires additional cleavage of the prodomain by a tolloid-like metalloproteinase.

The protein resides in the secreted. Functionally, acts specifically as a negative regulator of skeletal muscle growth. The sequence is that of Growth/differentiation factor 8 (MSTN) from Lepus capensis (Brown hare).